A 334-amino-acid chain; its full sequence is Holliday junction branch migration complex subunit RuvB (334 aa).

The segment at 4 to 184 (ADRLVSAGVI…FGIVQRLEFY (181 aa)) is large ATPase domain (RuvB-L). ATP-binding positions include Ile-23, Arg-24, Gly-65, Lys-68, Thr-69, Thr-70, 131 to 133 (EDY), Arg-174, Tyr-184, and Arg-221. Thr-69 contacts Mg(2+). The interval 185 to 255 (RVEDLQHIVG…VASRALDMLS (71 aa)) is small ATPAse domain (RuvB-S). A head domain (RuvB-H) region spans residues 258–334 (SEGFDYMDRK…YKHFGITREG (77 aa)). Arg-294, Arg-313, and Arg-318 together coordinate DNA.

This sequence belongs to the RuvB family. Homohexamer. Forms an RuvA(8)-RuvB(12)-Holliday junction (HJ) complex. HJ DNA is sandwiched between 2 RuvA tetramers; dsDNA enters through RuvA and exits via RuvB. An RuvB hexamer assembles on each DNA strand where it exits the tetramer. Each RuvB hexamer is contacted by two RuvA subunits (via domain III) on 2 adjacent RuvB subunits; this complex drives branch migration. In the full resolvosome a probable DNA-RuvA(4)-RuvB(12)-RuvC(2) complex forms which resolves the HJ.

The protein localises to the cytoplasm. The catalysed reaction is ATP + H2O = ADP + phosphate + H(+). In terms of biological role, the RuvA-RuvB-RuvC complex processes Holliday junction (HJ) DNA during genetic recombination and DNA repair, while the RuvA-RuvB complex plays an important role in the rescue of blocked DNA replication forks via replication fork reversal (RFR). RuvA specifically binds to HJ cruciform DNA, conferring on it an open structure. The RuvB hexamer acts as an ATP-dependent pump, pulling dsDNA into and through the RuvAB complex. RuvB forms 2 homohexamers on either side of HJ DNA bound by 1 or 2 RuvA tetramers; 4 subunits per hexamer contact DNA at a time. Coordinated motions by a converter formed by DNA-disengaged RuvB subunits stimulates ATP hydrolysis and nucleotide exchange. Immobilization of the converter enables RuvB to convert the ATP-contained energy into a lever motion, pulling 2 nucleotides of DNA out of the RuvA tetramer per ATP hydrolyzed, thus driving DNA branch migration. The RuvB motors rotate together with the DNA substrate, which together with the progressing nucleotide cycle form the mechanistic basis for DNA recombination by continuous HJ branch migration. Branch migration allows RuvC to scan DNA until it finds its consensus sequence, where it cleaves and resolves cruciform DNA. The chain is Holliday junction branch migration complex subunit RuvB from Erwinia tasmaniensis (strain DSM 17950 / CFBP 7177 / CIP 109463 / NCPPB 4357 / Et1/99).